The primary structure comprises 135 residues: T-cell receptor beta chain V region 3H.25 (135 aa).

An N-terminal signal peptide occupies residues 1 to 20; sequence MATRLLCYTVLCLLGARILN. Residues 21–115 are v segment; sequence SKVIQTPRYL…SALYLCASSL (95 aa). Residues Cys42 and Cys111 are joined by a disulfide bond. Residues 116 to 118 are d segment; it reads FGT. Positions 119-135 are j segment; sequence SDYTFGSGTRLLVIGKA.

This chain is T-cell receptor beta chain V region 3H.25, found in Mus musculus (Mouse).